Here is a 372-residue protein sequence, read N- to C-terminus: 4-hydroxy-3-methylbut-2-en-1-yl diphosphate synthase (flavodoxin) (372 aa).

[4Fe-4S] cluster is bound by residues C270, C273, C305, and E312.

Belongs to the IspG family. It depends on [4Fe-4S] cluster as a cofactor.

The enzyme catalyses (2E)-4-hydroxy-3-methylbut-2-enyl diphosphate + oxidized [flavodoxin] + H2O + 2 H(+) = 2-C-methyl-D-erythritol 2,4-cyclic diphosphate + reduced [flavodoxin]. It functions in the pathway isoprenoid biosynthesis; isopentenyl diphosphate biosynthesis via DXP pathway; isopentenyl diphosphate from 1-deoxy-D-xylulose 5-phosphate: step 5/6. Converts 2C-methyl-D-erythritol 2,4-cyclodiphosphate (ME-2,4cPP) into 1-hydroxy-2-methyl-2-(E)-butenyl 4-diphosphate. The chain is 4-hydroxy-3-methylbut-2-en-1-yl diphosphate synthase (flavodoxin) from Aliivibrio fischeri (strain ATCC 700601 / ES114) (Vibrio fischeri).